Consider the following 271-residue polypeptide: MAKVPDMFEDLKNCYSENEEDSSSIDHLSLNQKSFYHVSYGPLHEGCMDQSVSLSISETSKTSKLTFKESMVVVATNGKVLKKRRLSLSQSITDDDLEAIANDSEEEIIKPRSAPFSFLSNVKYNFMRIIKYEFILNDALNQSIIRANDQYLTAAALHNLDEAVKFDMGAYKSSKDDAKITVILRISKTQLYVTAQDEDQPVLLKEMPEIPKTITGSETNLLFFWETHGTKNYFTSVAHPNLFIATKQDYWVCLAGGPPSITDFQILENQA.

The propeptide occupies 1-112; the sequence is MAKVPDMFED…DSEEEIIKPR (112 aa). N6-acetyllysine is present on lysine 82. Residues lysine 82 and lysine 83 are each lipidated (N6-myristoyl lysine). Positions 82 to 86 are nuclear localization signal (NLS); it reads KKRRL. A Phosphoserine modification is found at serine 87. Residues asparagine 102 and asparagine 141 are each glycosylated (N-linked (GlcNAc...) asparagine).

This sequence belongs to the IL-1 family. As to quaternary structure, monomer. Interacts with TMED10; the interaction mediates the translocation from the cytoplasm into the ERGIC (endoplasmic reticulum-Golgi intermediate compartment) and thereby secretion. Interacts with IL1R1. Interacts with S100A13; this interaction is the first step in the export of IL1A, followed by direct translocation of this complex across the plasma membrane. In terms of processing, acetylated within its nuclear localization sequence, which impacts subcellular localization. Post-translationally, proteolytic processed by CAPN1 in a calcium-dependent manner. Cleavage from 31 kDa precursor to 18 kDa biologically active molecules. Phosphorylated. Phosphorylation greatly enhances susceptibility to digestion and promotes the conversion of pre-IL1A alpha to the biologically active IL1A.

It localises to the nucleus. The protein resides in the cytoplasm. Its subcellular location is the secreted. In terms of biological role, cytokine constitutively present intracellularly in nearly all resting non-hematopoietic cells that plays an important role in inflammation and bridges the innate and adaptive immune systems. After binding to its receptor IL1R1 together with its accessory protein IL1RAP, forms the high affinity interleukin-1 receptor complex. Signaling involves the recruitment of adapter molecules such as MYD88, IRAK1 or IRAK4. In turn, mediates the activation of NF-kappa-B and the three MAPK pathways p38, p42/p44 and JNK pathways. Within the cell, acts as an alarmin and cell death results in its liberation in the extracellular space after disruption of the cell membrane to induce inflammation and alert the host to injury or damage. In addition to its role as a danger signal, which occurs when the cytokine is passively released by cell necrosis, directly senses DNA damage and acts as a signal for genotoxic stress without loss of cell integrity. This is Interleukin-1 alpha (IL1A) from Homo sapiens (Human).